The following is a 568-amino-acid chain: Kelch-like protein 12 (568 aa).

The region spanning 33–100 (CDVTLRVEQK…VYTETVHVTV (68 aa)) is the BTB domain. The BACK domain maps to 135–236 (CLGIRDFAET…LTPRYITDVI (102 aa)). 6 Kelch repeats span residues 282-329 (VLLV…SLHD), 331-379 (IYVI…TLGD), 380-426 (MIYV…VASG), 427-473 (VIYC…LLND), 475-520 (IYVV…VLRG), and 522-567 (LYAI…VLRE). The tract at residues 405-568 (QWSMLGDMQT…DAGVCVLREK (164 aa)) is interaction with DVL3.

Component of the BCR(KLHL12) E3 ubiquitin ligase complex, at least composed of CUL3 and KLHL12 and RBX1. This complex interacts with DVL3 upon activation of the Wnt signaling pathway by WNT3A. Interacts with DRD4, KLHL2 and SEC31A. Interacts with PEF1 and PDCD6/ALG-2; interaction takes place in response to cytosolic calcium increase and leads to bridge together the BCR(KLHL12) complex and SEC31 (SEC31A or SEC31B). Post-translationally, ubiquitinated by the SCF(FBXL17) complex, leading to its degradation by the proteasome: ubiquitination by the SCF(FBXL17) complex takes place when aberrant BTB domain dimers are formed. As to expression, ubiquitously expressed. Highly expressed in testis and at lower levels in the submandibular salivary gland.

The protein localises to the cytoplasmic vesicle. Its subcellular location is the COPII-coated vesicle. The protein operates within protein modification; protein ubiquitination. Substrate-specific adapter of a BCR (BTB-CUL3-RBX1) E3 ubiquitin ligase complex that acts as a negative regulator of Wnt signaling pathway and ER-Golgi transport. The BCR(KLHL12) complex is involved in ER-Golgi transport by regulating the size of COPII coats, thereby playing a key role in collagen export, which is required for embryonic stem (ES) cells division: BCR(KLHL12) acts by mediating monoubiquitination of SEC31 (SEC31A or SEC31B). The BCR(KLHL12) complex is also involved in neural crest specification: in response to cytosolic calcium increase, interacts with the heterodimer formed with PEF1 and PDCD6/ALG-2, leading to bridge together the BCR(KLHL12) complex and SEC31 (SEC31A or SEC31B), promoting monoubiquitination of SEC31 and subsequent collagen export. As part of the BCR(KLHL12) complex, also acts as a negative regulator of the Wnt signaling pathway by mediating ubiquitination and subsequent proteolysis of DVL3. The BCR(KLHL12) complex also mediates polyubiquitination of DRD4 and PEF1, without leading to degradation of these proteins. This is Kelch-like protein 12 (KLHL12) from Homo sapiens (Human).